The following is a 209-amino-acid chain: Kynurenine formamidase (209 aa).

Position 20 (tryptophan 20) interacts with substrate. Zn(2+) contacts are provided by histidine 50, histidine 54, and aspartate 56. Catalysis depends on histidine 60, which acts as the Proton donor/acceptor. Zn(2+) contacts are provided by histidine 161 and glutamate 173.

Belongs to the Cyclase 1 superfamily. KynB family. As to quaternary structure, homodimer. It depends on Zn(2+) as a cofactor.

The catalysed reaction is N-formyl-L-kynurenine + H2O = L-kynurenine + formate + H(+). The protein operates within amino-acid degradation; L-tryptophan degradation via kynurenine pathway; L-kynurenine from L-tryptophan: step 2/2. In terms of biological role, catalyzes the hydrolysis of N-formyl-L-kynurenine to L-kynurenine, the second step in the kynurenine pathway of tryptophan degradation. The protein is Kynurenine formamidase of Bacillus thuringiensis subsp. konkukian (strain 97-27).